Consider the following 418-residue polypeptide: Diacylglycerol O-acyltransferase 1 (418 aa).

The tract at residues 1 to 30 is disordered; it reads MSGTFNDIRRRKKEEGSPTAGITERHENKS. Residues 1–71 lie on the Cytoplasmic side of the membrane; the sequence is MSGTFNDIRR…LAVAWHTSSF (71 aa). S17 is modified (phosphoserine). Residues 72-92 traverse the membrane as a helical segment; the sequence is VLFSIFTLFAISTPALWVLAI. The Lumenal segment spans residues 93-186; the sequence is PYMIYFFFDR…DYRNQECTGP (94 aa). The N-linked (GlcNAc...) asparagine glycan is linked to N173. The chain crosses the membrane as a helical span at residues 187-207; it reads TYLFGYHPHGIGALGAFGAFA. The Cytoplasmic segment spans residues 208–215; that stretch reads TEGCNYSK. Residues 216 to 236 form a helical membrane-spanning segment; the sequence is IFPGIPISLMTLVTQFHIPLY. The Lumenal segment spans residues 237 to 289; sequence RDYLLALGISSVSRKNALRTLSKNQSICIVVGGARESLLSSTNGTQLILNKRK. N260 and N279 each carry an N-linked (GlcNAc...) asparagine glycan. A helical membrane pass occupies residues 290-310; that stretch reads GFIKLAIQTGNINLVPVFAFG. At 311–418 the chain is on the cytoplasmic side; that stretch reads EVDCYNVLST…VPDAELKIVG (108 aa).

The protein belongs to the diacylglycerol acyltransferase family.

It localises to the lipid droplet. The protein resides in the endoplasmic reticulum membrane. It carries out the reaction an acyl-CoA + a 1,2-diacyl-sn-glycerol = a triacyl-sn-glycerol + CoA. The enzyme catalyses a 2-acylglycerol + an acyl-CoA = a 1,2-diacylglycerol + CoA. The catalysed reaction is 2-(9Z-octadecenoyl)-glycerol + (9Z)-octadecenoyl-CoA = 1,2-di-(9Z-octadecenoyl)-glycerol + CoA. The protein operates within glycerolipid metabolism; triacylglycerol biosynthesis. Its function is as follows. Catalyzes the terminal and only committed step in triacylglycerol (TAG) synthesis by using diacylglycerol (DAG) and fatty acyl-CoA as substrates. Required for storage lipid synthesis. Major DAG esterifying enzyme in stationary phase when TAG production is particularly active. Involved in lipid particle synthesis from the endoplasmic reticulum, promoting localized TAG production at discrete ER subdomains, and in ergosterol biosynthesis. Also has monoacylglycerol acyltransferase (MGAT) activity, catalyzing the acyl-CoA-dependent esterification of monoacylglycerol to diacylglycerol. Can also utilize ceramide instead of DAG, acylating the ceramides by attaching a fatty acid to the hydroxy group on the first carbon atom of the long-chain base to produce 1-O-acylceramides. The sequence is that of Diacylglycerol O-acyltransferase 1 (DGA1) from Saccharomyces cerevisiae (strain ATCC 204508 / S288c) (Baker's yeast).